A 645-amino-acid polypeptide reads, in one-letter code: Threonine--tRNA ligase (645 aa).

The 61-residue stretch at 1–61 (MIKITLPDGS…TSDSTVQLLT (61 aa)) folds into the TGS domain. The catalytic stretch occupies residues 242–541 (DHRKLGKELE…LIEHVAGNFP (300 aa)). Zn(2+)-binding residues include C337, H388, and H518.

Belongs to the class-II aminoacyl-tRNA synthetase family. As to quaternary structure, homodimer. The cofactor is Zn(2+).

It is found in the cytoplasm. It catalyses the reaction tRNA(Thr) + L-threonine + ATP = L-threonyl-tRNA(Thr) + AMP + diphosphate + H(+). In terms of biological role, catalyzes the attachment of threonine to tRNA(Thr) in a two-step reaction: L-threonine is first activated by ATP to form Thr-AMP and then transferred to the acceptor end of tRNA(Thr). Also edits incorrectly charged L-seryl-tRNA(Thr). This Cytophaga hutchinsonii (strain ATCC 33406 / DSM 1761 / CIP 103989 / NBRC 15051 / NCIMB 9469 / D465) protein is Threonine--tRNA ligase.